Here is a 21-residue protein sequence, read N- to C-terminus: Sarafotoxin-D (21 aa).

Intrachain disulfides connect cysteine 1/cysteine 15 and cysteine 3/cysteine 11.

The protein belongs to the endothelin/sarafotoxin family. As to expression, expressed by the venom gland.

It is found in the secreted. In terms of biological role, vasoconstrictor activity. These toxins cause cardiac arrest probably as a result of coronary vasospasm. May act by displaying agonistic activities towards endothelin-1 and -2 receptors (EDNRA and EDNRB). The chain is Sarafotoxin-D from Atractaspis engaddensis (Israeli burrowing asp).